The following is a 225-amino-acid chain: Cytochrome c oxidase subunit 2 (225 aa).

At 1–25 (MSTWMMFMFQESNSLYADNLVSFHN) the chain is on the mitochondrial intermembrane side. A helical membrane pass occupies residues 26 to 47 (MVMIIVIMISTLTVYIIFDLFL). Over 48 to 62 (NKFSNLYLLKNHNIE) the chain is Mitochondrial matrix. The helical transmembrane segment at 63–82 (IIWMIVPIVILLIICFPSLK) threads the bilayer. The Mitochondrial intermembrane portion of the chain corresponds to 83–225 (ILYLIDEIVN…YFMNWIYKMN (143 aa)). 6 residues coordinate Cu cation: His-159, Cys-194, Glu-196, Cys-198, His-202, and Met-205. Glu-196 lines the Mg(2+) pocket.

It belongs to the cytochrome c oxidase subunit 2 family. As to quaternary structure, component of the cytochrome c oxidase (complex IV, CIV), a multisubunit enzyme composed of a catalytic core of 3 subunits and several supernumerary subunits. The complex exists as a monomer or a dimer and forms supercomplexes (SCs) in the inner mitochondrial membrane with ubiquinol-cytochrome c oxidoreductase (cytochrome b-c1 complex, complex III, CIII). It depends on Cu cation as a cofactor.

Its subcellular location is the mitochondrion inner membrane. It carries out the reaction 4 Fe(II)-[cytochrome c] + O2 + 8 H(+)(in) = 4 Fe(III)-[cytochrome c] + 2 H2O + 4 H(+)(out). Component of the cytochrome c oxidase, the last enzyme in the mitochondrial electron transport chain which drives oxidative phosphorylation. The respiratory chain contains 3 multisubunit complexes succinate dehydrogenase (complex II, CII), ubiquinol-cytochrome c oxidoreductase (cytochrome b-c1 complex, complex III, CIII) and cytochrome c oxidase (complex IV, CIV), that cooperate to transfer electrons derived from NADH and succinate to molecular oxygen, creating an electrochemical gradient over the inner membrane that drives transmembrane transport and the ATP synthase. Cytochrome c oxidase is the component of the respiratory chain that catalyzes the reduction of oxygen to water. Electrons originating from reduced cytochrome c in the intermembrane space (IMS) are transferred via the dinuclear copper A center (CU(A)) of subunit 2 and heme A of subunit 1 to the active site in subunit 1, a binuclear center (BNC) formed by heme A3 and copper B (CU(B)). The BNC reduces molecular oxygen to 2 water molecules using 4 electrons from cytochrome c in the IMS and 4 protons from the mitochondrial matrix. This Apis florea (Dwarf honeybee) protein is Cytochrome c oxidase subunit 2 (COII).